We begin with the raw amino-acid sequence, 369 residues long: tRNA/tmRNA (uracil-C(5))-methyltransferase (369 aa).

S-adenosyl-L-methionine is bound by residues Gln190, Tyr218, Asn223, Glu239, and Asp301. Cys326 acts as the Nucleophile in catalysis. Glu360 serves as the catalytic Proton acceptor.

Belongs to the class I-like SAM-binding methyltransferase superfamily. RNA M5U methyltransferase family. TrmA subfamily.

It carries out the reaction uridine(54) in tRNA + S-adenosyl-L-methionine = 5-methyluridine(54) in tRNA + S-adenosyl-L-homocysteine + H(+). It catalyses the reaction uridine(341) in tmRNA + S-adenosyl-L-methionine = 5-methyluridine(341) in tmRNA + S-adenosyl-L-homocysteine + H(+). Functionally, dual-specificity methyltransferase that catalyzes the formation of 5-methyluridine at position 54 (m5U54) in all tRNAs, and that of position 341 (m5U341) in tmRNA (transfer-mRNA). This chain is tRNA/tmRNA (uracil-C(5))-methyltransferase, found in Vibrio vulnificus (strain YJ016).